A 564-amino-acid polypeptide reads, in one-letter code: Septation ring formation regulator EzrA (564 aa).

Residues 1-2 (ME) lie on the Extracellular side of the membrane. Residues 3–21 (FVIGLLALFLILFATGYLF) traverse the membrane as a helical segment. Residues 22–564 (RKNIYKEIDR…RLEADAKQPE (543 aa)) are Cytoplasmic-facing. Coiled coils occupy residues 99-159 (QKSK…AYSH), 243-281 (KGYKLDHIQVEKELENLLKELKRAEDALLDELDLEEAAA), and 310-498 (KVPE…VELV).

The protein belongs to the EzrA family.

It localises to the cell membrane. In terms of biological role, negative regulator of FtsZ ring formation; modulates the frequency and position of FtsZ ring formation. Inhibits FtsZ ring formation at polar sites. Interacts either with FtsZ or with one of its binding partners to promote depolymerization. This is Septation ring formation regulator EzrA from Bacillus licheniformis (strain ATCC 14580 / DSM 13 / JCM 2505 / CCUG 7422 / NBRC 12200 / NCIMB 9375 / NCTC 10341 / NRRL NRS-1264 / Gibson 46).